The sequence spans 469 residues: Cytosolic beta-glucosidase (469 aa).

Substrate contacts are provided by Q17, H120, and N164. The active-site Proton donor is the E165. Y309 serves as a coordination point for substrate. E373 acts as the Nucleophile in catalysis. Substrate-binding positions include W417 and 424 to 425; that span reads EW.

This sequence belongs to the glycosyl hydrolase 1 family. Klotho subfamily. In terms of processing, the N-terminus is blocked. Present in hepatocytes (at protein level).

The protein localises to the cytoplasm. It localises to the cytosol. It carries out the reaction Hydrolysis of terminal, non-reducing beta-D-glucosyl residues with release of beta-D-glucose.. The enzyme catalyses a beta-D-glucosyl-(1&lt;-&gt;1')-N-acylsphing-4-enine + H2O = an N-acylsphing-4-enine + D-glucose. It catalyses the reaction a beta-D-galactosyl-(1&lt;-&gt;1')-N-acylsphing-4-enine + H2O = an N-acylsphing-4-enine + D-galactose. The catalysed reaction is beta-D-glucosyl-(1&lt;-&gt;1)-sphing-4-enine + H2O = sphing-4-enine + D-glucose. It carries out the reaction beta-D-glucosyl-(1&lt;-&gt;1)-N-octadecanoylsphing-4-enine + H2O = N-octadecanoylsphing-4-enine + D-glucose. The enzyme catalyses beta-D-galactosyl-(1&lt;-&gt;1)-sphing-4-enine + H2O = sphing-4-enine + D-galactose. It catalyses the reaction beta-D-galactosyl-(1&lt;-&gt;1')-N-octadecanoylsphing-4-enine + H2O = N-octadecanoylsphing-4-enine + D-galactose. The catalysed reaction is a beta-D-xylosyl-(1&lt;-&gt;1')-N-acylsphing-4-enine + cholesterol = cholesteryl 3-beta-D-xyloside + an N-acylsphing-4-enine. Inhibited by 2,4-dinitrophenyl-2-fluoro-2-deoxy-beta-D-glucopyranoside. Its function is as follows. Neutral cytosolic beta-glycosidase with a broad substrate specificity that could play a role in the catabolism of glycosylceramides. Has a significant glucosylceramidase activity in vitro. However, that activity is relatively low and its significance in vivo is not clear. Hydrolyzes galactosylceramide/GalCer, glucosylsphingosine/GlcSph and galactosylsphingosine/GalSph. However, the in vivo relevance of these activities is unclear. It can also hydrolyze a broad variety of dietary glycosides including phytoestrogens, flavonols, flavones, flavanones and cyanogens in vitro and could therefore play a role in the metabolism of xenobiotics. Possesses transxylosylase activity in vitro using xylosylated ceramides/XylCers (such as beta-D-xylosyl-(1&lt;-&gt;1')-N-acylsphing-4-enine) as xylosyl donors and cholesterol as acceptor. Could also play a role in the catabolism of cytosolic sialyl free N-glycans. The polypeptide is Cytosolic beta-glucosidase (Cavia porcellus (Guinea pig)).